Consider the following 426-residue polypeptide: Anaerobic glycerol-3-phosphate dehydrogenase subunit B (426 aa).

It belongs to the anaerobic G-3-P dehydrogenase subunit B family. Composed of a catalytic GlpA/B dimer and of membrane bound GlpC. The cofactor is FMN.

The enzyme catalyses a quinone + sn-glycerol 3-phosphate = dihydroxyacetone phosphate + a quinol. It participates in polyol metabolism; glycerol degradation via glycerol kinase pathway; glycerone phosphate from sn-glycerol 3-phosphate (anaerobic route): step 1/1. Its function is as follows. Conversion of glycerol 3-phosphate to dihydroxyacetone. Uses fumarate or nitrate as electron acceptor. This Haemophilus ducreyi (strain 35000HP / ATCC 700724) protein is Anaerobic glycerol-3-phosphate dehydrogenase subunit B.